The primary structure comprises 357 residues: Peptide chain release factor 1 (357 aa).

At Q232 the chain carries N5-methylglutamine.

It belongs to the prokaryotic/mitochondrial release factor family. In terms of processing, methylated by PrmC. Methylation increases the termination efficiency of RF1.

It localises to the cytoplasm. Functionally, peptide chain release factor 1 directs the termination of translation in response to the peptide chain termination codons UAG and UAA. The chain is Peptide chain release factor 1 from Nitratidesulfovibrio vulgaris (strain ATCC 29579 / DSM 644 / CCUG 34227 / NCIMB 8303 / VKM B-1760 / Hildenborough) (Desulfovibrio vulgaris).